Reading from the N-terminus, the 324-residue chain is Putative ribose-phosphate pyrophosphokinase 1 (324 aa).

Residues 43–45 and 102–103 contribute to the ATP site; these read DGE and RQ. His-136 is a binding site for Mg(2+). Residues Asp-225 and 229 to 233 each bind D-ribose 5-phosphate; that span reads NTGQT.

This sequence belongs to the ribose-phosphate pyrophosphokinase family. Class I subfamily. As to quaternary structure, homohexamer. Requires Mg(2+) as cofactor.

The protein localises to the cytoplasm. It carries out the reaction D-ribose 5-phosphate + ATP = 5-phospho-alpha-D-ribose 1-diphosphate + AMP + H(+). Its pathway is metabolic intermediate biosynthesis; 5-phospho-alpha-D-ribose 1-diphosphate biosynthesis; 5-phospho-alpha-D-ribose 1-diphosphate from D-ribose 5-phosphate (route I): step 1/1. In terms of biological role, involved in the biosynthesis of the central metabolite phospho-alpha-D-ribosyl-1-pyrophosphate (PRPP) via the transfer of pyrophosphoryl group from ATP to 1-hydroxyl of ribose-5-phosphate (Rib-5-P). The chain is Putative ribose-phosphate pyrophosphokinase 1 from Enterococcus faecalis (strain ATCC 700802 / V583).